The sequence spans 1930 residues: Transport and Golgi organization protein 1 homolog (1930 aa).

Residues 1–24 (MAAAPGLLFWLFVLGALWWVPGQS) form the signal peptide. Residues 25 to 1171 (DLSHGRRFSD…EPAAVPPLES (1147 aa)) are Lumenal-facing. In terms of domain architecture, SH3 spans 45–107 (MLMYRGKALE…PKDLIKVLHK (63 aa)). Disordered regions lie at residues 144–263 (LELE…REKT), 317–496 (EEEE…AAEK), 547–737 (LGSS…MNSQ), 754–891 (TKQP…TPEI), and 1018–1149 (TAPL…PVGA). Residues 152–189 (EESKKAEEVSQHREKSPEESRGRELDPVPEPEAFRADS) show a composition bias toward basic and acidic residues. A compositionally biased stretch (polar residues) spans 197-211 (SESTEGLQGQPSAQE). At serine 229 the chain carries Phosphoserine. Residues 247–256 (ESRTGNSSPA) are compositionally biased toward polar residues. Acidic residues predominate over residues 317–330 (EEEEEVEEDADSSD). Basic and acidic residues predominate over residues 338-368 (SDKDEKVPGKPMIEKYLTDKDPNLSEEDKVE). The N-linked (GlcNAc...) asparagine glycan is linked to asparagine 360. Acidic residues predominate over residues 420 to 430 (DSEDEGDDLFV). Basic and acidic residues-rich tracts occupy residues 431-442 (EEPKTNDVKDSE) and 451-461 (GEEKDIQESRK). Residue asparagine 631 is glycosylated (N-linked (GlcNAc...) asparagine). Residues 661–677 (EDGTDAEQARAIRRPQE) show a composition bias toward basic and acidic residues. The span at 692-701 (DEEEEEEEGD) shows a compositional bias: acidic residues. Over residues 715 to 726 (VSAQQSRENSPS) the composition is skewed to polar residues. A compositionally biased stretch (basic and acidic residues) spans 791 to 800 (EESHLADMRA). Serine 856 carries the phosphoserine modification. Positions 1030–1039 (GWARPGEERQ) are enriched in basic and acidic residues. 2 stretches are compositionally biased toward polar residues: residues 1040–1054 (PPQQDSLPQENTGDL) and 1115–1127 (QPVTGYTSTSEVS). Over residues 1128–1137 (QKPDTKKDID) the composition is skewed to basic and acidic residues. An intramembrane segment occupies 1172 to 1192 (AFGSLYAFILYLSKMLLATLP). The Lumenal portion of the chain corresponds to 1193-1202 (DNVQPGPDFY). Residues 1203 to 1223 (GLPWQPVIITAVLGIVSFAIF) form a helical membrane-spanning segment. At 1224 to 1930 (SWRTILVVKS…DRSQASKPTP (707 aa)) the chain is on the cytoplasmic side. Coiled coils occupy residues 1236-1329 (YQVT…KNQD) and 1359-1422 (LNEA…EIAL). Residues 1238 to 1677 (VTEKQISEKL…VIVKPMPGRP (440 aa)) are mediates interaction with MIA2. The interval 1447–1472 (ESEDPDKGGNESDDLANGETGGDRSE) is disordered. Serine 1458 is modified (phosphoserine). Residues 1514–1662 (NLEDQIKKLE…LLEMTQKMAM (149 aa)) adopt a coiled-coil conformation. Disordered stretches follow at residues 1669 to 1796 (IVKP…VPLM), 1801 to 1820 (PPPIRYGPPPQLCGGPFGPR), and 1840 to 1930 (APGV…KPTP). Over residues 1677-1694 (PNTQNPPRRGLLSQNGSF) the composition is skewed to polar residues. A phosphoserine mark is found at serine 1693 and serine 1705. Residues 1706–1715 (PPLPAEPPGR) are compositionally biased toward pro residues. Residues 1722 to 1738 (SRRDTPRSEFGSLDRHL) show a composition bias toward basic and acidic residues. 4 positions are modified to phosphoserine: serine 1733, serine 1754, serine 1766, and serine 1770. Over residues 1760 to 1773 (PVVNSSSRSSSPAK) the composition is skewed to low complexity. A proline-rich domain (PRD); mediates interaction with the COPII coat subunits SEC23A and SEC23B region spans residues 1776-1930 (DEGKVNMAPK…DRSQASKPTP (155 aa)). Residues 1801 to 1811 (PPPIRYGPPPQ) are compositionally biased toward pro residues. An Asymmetric dimethylarginine modification is found at arginine 1805. Residues 1809–1869 (PPQLCGGPFG…GHTPFRPPGS (61 aa)) form an SEC16A-interacting region (SIR); required for its localization to endoplasmic reticulum exit sites and for its interaction with SEC16A region. Basic and acidic residues predominate over residues 1846–1858 (GKRDLPLDPREFL). Over residues 1881-1898 (RLPPPTHGPQEYPPPPPA) the composition is skewed to pro residues. Serine 1915 bears the Phosphoserine mark. The span at 1915–1930 (SPSSVQDRSQASKPTP) shows a compositional bias: polar residues.

The protein belongs to the MIA/OTOR family. Tango1 subfamily. Interacts with MIA2. Interacts (via SH3 domain) with COL7A1. Interacts with the COPII coat subunits SEC23A, SEC23B and maybe SEC24C. May interact with APOB and MIA2. Interacts with SEC16A.

Its subcellular location is the endoplasmic reticulum membrane. Functionally, plays a role in the transport of cargos that are too large to fit into COPII-coated vesicles and require specific mechanisms to be incorporated into membrane-bound carriers and exported from the endoplasmic reticulum. This protein is required for collagen VII (COL7A1) secretion by loading COL7A1 into transport carriers. It may participate in cargo loading of COL7A1 at endoplasmic reticulum exit sites by binding to COPII coat subunits Sec23/24 and guiding SH3-bound COL7A1 into a growing carrier. Does not play a role in global protein secretion and is apparently specific to COL7A1 cargo loading. However, it may participate in secretion of other proteins in cells that do not secrete COL7A1. It is also specifically required for the secretion of lipoproteins by participating in their export from the endoplasmic reticulum. Required for correct assembly of COPII coat components at endoplasmic reticulum exit sites (ERES) and for the localization of SEC16A and membrane-bound ER-resident complexes consisting of MIA2 and PREB/SEC12 to ERES. The protein is Transport and Golgi organization protein 1 homolog of Mus musculus (Mouse).